A 275-amino-acid polypeptide reads, in one-letter code: NH(3)-dependent NAD(+) synthetase (275 aa).

Position 46–53 (46–53) interacts with ATP; sequence GISGGQDS. Mg(2+) is bound at residue aspartate 52. Arginine 140 serves as a coordination point for deamido-NAD(+). Threonine 160 contributes to the ATP binding site. Residue glutamate 165 participates in Mg(2+) binding. Deamido-NAD(+)-binding residues include lysine 173 and aspartate 180. Residues lysine 189 and threonine 211 each coordinate ATP. 260–261 is a deamido-NAD(+) binding site; the sequence is HK.

This sequence belongs to the NAD synthetase family. In terms of assembly, homodimer.

It catalyses the reaction deamido-NAD(+) + NH4(+) + ATP = AMP + diphosphate + NAD(+) + H(+). It functions in the pathway cofactor biosynthesis; NAD(+) biosynthesis; NAD(+) from deamido-NAD(+) (ammonia route): step 1/1. In terms of biological role, catalyzes the ATP-dependent amidation of deamido-NAD to form NAD. Uses ammonia as a nitrogen source. This is NH(3)-dependent NAD(+) synthetase from Salmonella paratyphi A (strain ATCC 9150 / SARB42).